Reading from the N-terminus, the 318-residue chain is V-set and immunoglobulin domain-containing protein 1 (318 aa).

The N-terminal stretch at 1–19 (MSFLLFITLGLSLTALSHC) is a signal peptide. The region spanning 20–131 (VQVTIQNPII…SSGQGKILLT (112 aa)) is the Ig-like V-type domain. Residues 20–233 (VQVTIQNPII…TGGEGGVIAA (214 aa)) lie on the Extracellular side of the membrane. Intrachain disulfides connect Cys-41/Cys-114 and Cys-157/Cys-207. Positions 136–223 (PSVPHCSIRG…GNATCELNLH (88 aa)) constitute an Ig-like C2-type domain. Residues 234-254 (AVIGGLLAAAIIIAIVWFLVV) traverse the membrane as a helical segment. At 255 to 318 (KRKQKKQLPP…ANGETEEPTA (64 aa)) the chain is on the cytoplasmic side. The tract at residues 261–318 (QLPPTKEMKTGGNQYMAVSGEANEPPKENLGASEPTETIQFHDHAENAANGETEEPTA) is disordered.

In terms of tissue distribution, expressed in thymocytes.

Its subcellular location is the membrane. The polypeptide is V-set and immunoglobulin domain-containing protein 1 (vsig1) (Xenopus laevis (African clawed frog)).